The primary structure comprises 402 residues: B3 domain-containing protein LFL1 (402 aa).

Residues 1–174 (MRGEERWQEQ…AAPRPSSHHT (174 aa)) are disordered. Residues 74–87 (ARPPTLAASAAAAS) are compositionally biased toward low complexity. Residues 88–102 (SPPPPPPPPIPPLPP) are compositionally biased toward pro residues. Composition is skewed to low complexity over residues 103-139 (STSTSAARPTDMAGVTSKRRSSSASTSSSSGDGAAVS) and 156-169 (PRPAASLRPAAPRP). Positions 181 to 284 (LQKELRYSDV…RFVIGAKKAG (104 aa)) form a DNA-binding region, TF-B3. The segment at 381-402 (LHVTDDKSGHSLIPNPKSGPHM) is disordered.

In terms of tissue distribution, expressed in anthers, pollen grains and young developing embryos.

It localises to the nucleus. In terms of biological role, transcription repressor involved in flowering time regulation. Represses the flowering activator EHD1 by binding specifically to the DNA sequence 5'-CATGCATG-3 of its promoter. This chain is B3 domain-containing protein LFL1 (LFL1), found in Oryza sativa subsp. japonica (Rice).